The chain runs to 1050 residues: Self-sufficient cytochrome P450 monooxygenase CYP505E5 (1050 aa).

Cys-405 is a heme binding site. The tract at residues 461 to 495 is disordered; the sequence is TATGLSRRSMLVARDGSSEESSNHPAEARGDHAPA. A Flavodoxin-like domain is found at 500–641; sequence VSFFYGSNSG…DLEAWEETSL (142 aa). Residues 506–510 and 585–617 contribute to the FMN site; these read SNSGT and VFGC…TRLA. Residues 679 to 907 enclose the FAD-binding FR-type domain; sequence KGLIEAKVTA…RPAKETFHLP (229 aa).

It in the N-terminal section; belongs to the cytochrome P450 family. FAD is required as a cofactor. Requires FMN as cofactor. Heme serves as cofactor.

It carries out the reaction 2 oxidized [cytochrome P450] + NADPH = 2 reduced [cytochrome P450] + NADP(+) + H(+). It catalyses the reaction an organic molecule + reduced [NADPH--hemoprotein reductase] + O2 = an alcohol + oxidized [NADPH--hemoprotein reductase] + H2O + H(+). The catalysed reaction is dodecanoate + reduced [NADPH--hemoprotein reductase] + O2 = 5-hydroxydodecanoate + oxidized [NADPH--hemoprotein reductase] + H2O + H(+). The enzyme catalyses tetradecanoate + reduced [NADPH--hemoprotein reductase] + O2 = 7-hydroxytetradecanoate + oxidized [NADPH--hemoprotein reductase] + H2O + H(+). It carries out the reaction dodecan-1-ol + reduced [NADPH--hemoprotein reductase] + O2 = 1,5-dodecanediol + oxidized [NADPH--hemoprotein reductase] + H2O + H(+). It catalyses the reaction dodecan-1-ol + reduced [NADPH--hemoprotein reductase] + O2 = 1,4-dodecanediol + oxidized [NADPH--hemoprotein reductase] + H2O + H(+). The catalysed reaction is dodecan-1-ol + reduced [NADPH--hemoprotein reductase] + O2 = 1,6-dodecanediol + oxidized [NADPH--hemoprotein reductase] + H2O + H(+). Self-sufficient cytochrome P450 monooxygenase that catalyzes the regioselective in-chain hydroxylation of alkanes, fatty alcohols, and fatty acids at the omega-7 position. Performs hydroxylation of C10-C16 n-alkanes and C12 and C14 fatty alcohols; and thereby enables the one step biocatalytic synthesis of rare alcohols such as 5-dodecanol and 7-tetradecanol. Converts 1-dodecanol into 1,5-dodecanediol as major product with very little sub-terminally hydroxylated products with the 1,4-dodecanediol and 1,6-dodecanediol more abundant. Converts dodecanoic acid to 5-hydroxydodecanoic acid which can be further converted into delta-dodecalactone by lactonization of the 5-hydroxy acid at low pH. Also gives sub-terminal hydroxylation of dodecanoic acid with 9-hydroxydodecanoic acid being the second most abundant product. The protein is Self-sufficient cytochrome P450 monooxygenase CYP505E5 of Aspergillus kawachii (strain NBRC 4308) (White koji mold).